A 38-amino-acid chain; its full sequence is Large ribosomal subunit protein bL36 (38 aa).

This sequence belongs to the bacterial ribosomal protein bL36 family.

In Limosilactobacillus fermentum (strain NBRC 3956 / LMG 18251) (Lactobacillus fermentum), this protein is Large ribosomal subunit protein bL36.